The sequence spans 369 residues: Phenylalanine--tRNA ligase alpha subunit (369 aa).

Glu-269 serves as a coordination point for Mg(2+).

This sequence belongs to the class-II aminoacyl-tRNA synthetase family. Phe-tRNA synthetase alpha subunit type 1 subfamily. In terms of assembly, tetramer of two alpha and two beta subunits. Requires Mg(2+) as cofactor.

It is found in the cytoplasm. The catalysed reaction is tRNA(Phe) + L-phenylalanine + ATP = L-phenylalanyl-tRNA(Phe) + AMP + diphosphate + H(+). The polypeptide is Phenylalanine--tRNA ligase alpha subunit (Nitrobacter winogradskyi (strain ATCC 25391 / DSM 10237 / CIP 104748 / NCIMB 11846 / Nb-255)).